A 115-amino-acid polypeptide reads, in one-letter code: uncharacterized protein (115 aa).

2 helical membrane-spanning segments follow: residues 11 to 31 (FLYLIVAMVILCPLGILLVWN) and 85 to 105 (GYIISAIVGVILCVGAYYALI).

The protein to M.thermoautotrophicum MTH1706.

Its subcellular location is the cell membrane. This is an uncharacterized protein from Methanocaldococcus jannaschii (strain ATCC 43067 / DSM 2661 / JAL-1 / JCM 10045 / NBRC 100440) (Methanococcus jannaschii).